A 221-amino-acid polypeptide reads, in one-letter code: Ribosomal RNA small subunit methyltransferase G (221 aa).

S-adenosyl-L-methionine contacts are provided by residues Gly-89, Leu-94, 140–141 (VE), and Arg-154.

This sequence belongs to the methyltransferase superfamily. RNA methyltransferase RsmG family.

The protein resides in the cytoplasm. It catalyses the reaction guanosine(527) in 16S rRNA + S-adenosyl-L-methionine = N(7)-methylguanosine(527) in 16S rRNA + S-adenosyl-L-homocysteine. Functionally, specifically methylates the N7 position of guanine in position 527 of 16S rRNA. The polypeptide is Ribosomal RNA small subunit methyltransferase G (Methylibium petroleiphilum (strain ATCC BAA-1232 / LMG 22953 / PM1)).